The chain runs to 338 residues: Glycerol-3-phosphate dehydrogenase [NAD(P)+] (338 aa).

NADPH contacts are provided by serine 12, tryptophan 13, lysine 34, and lysine 110. Residues lysine 110, glycine 141, and serine 143 each contribute to the sn-glycerol 3-phosphate site. Alanine 145 contacts NADPH. Sn-glycerol 3-phosphate contacts are provided by lysine 196, aspartate 249, serine 259, arginine 260, and asparagine 261. Lysine 196 serves as the catalytic Proton acceptor. Residue arginine 260 coordinates NADPH. Residues valine 284 and glutamate 286 each coordinate NADPH.

The protein belongs to the NAD-dependent glycerol-3-phosphate dehydrogenase family.

It localises to the cytoplasm. The enzyme catalyses sn-glycerol 3-phosphate + NAD(+) = dihydroxyacetone phosphate + NADH + H(+). It catalyses the reaction sn-glycerol 3-phosphate + NADP(+) = dihydroxyacetone phosphate + NADPH + H(+). It functions in the pathway membrane lipid metabolism; glycerophospholipid metabolism. Its function is as follows. Catalyzes the reduction of the glycolytic intermediate dihydroxyacetone phosphate (DHAP) to sn-glycerol 3-phosphate (G3P), the key precursor for phospholipid synthesis. This Ligilactobacillus salivarius (strain UCC118) (Lactobacillus salivarius) protein is Glycerol-3-phosphate dehydrogenase [NAD(P)+].